A 104-amino-acid polypeptide reads, in one-letter code: Evasin P1174 (104 aa).

Positions 1–27 (LKTFCLFLQIAVFIALGIQIFLCGTDA) are cleaved as a signal peptide. Intrachain disulfides connect C40-C59, C44-C61, and C55-C72. N43, N49, and N58 each carry an N-linked (GlcNAc...) asparagine glycan. Residues 85 to 104 (KPTSEEIADASPRPKETNSH) form a disordered region.

The protein localises to the secreted. Salivary chemokine-binding protein which binds to host chemokines CXCL1 and CXCL8. This Ixodes ricinus (Common tick) protein is Evasin P1174.